Here is an 87-residue protein sequence, read N- to C-terminus: U3-theraphotoxin-Hhn1f (87 aa).

An N-terminal signal peptide occupies residues 1-24; that stretch reads MVNMKASMFLTSAGLVLLFVVCYA. The propeptide occupies 25–52; that stretch reads SESEEKEFPKEMLSSIFAVDNDFKQEER. 3 disulfides stabilise this stretch: C54–C67, C61–C72, and C66–C79.

It belongs to the neurotoxin 10 (Hwtx-1) family. 51 (Hntx-8) subfamily. Hntx-8 sub-subfamily. Expressed by the venom gland.

It localises to the secreted. Its function is as follows. Ion channel inhibitor. This is U3-theraphotoxin-Hhn1f from Cyriopagopus hainanus (Chinese bird spider).